A 450-amino-acid chain; its full sequence is E3 ubiquitin-protein ligase XB3 (450 aa).

ANK repeat units follow at residues 11–40, 46–75, 79–108, 113–142, 158–187, and 195–225; these read GDEH…SLAR, DRLS…PPDA, HKQT…NILM, HART…TTPV, HGAT…IVSA, and PGST…RLQR. The segment at 291–312 is disordered; it reads ILNGTKYSLPSPSPGDDSADDD. Residues 323–372 form an RING-type zinc finger; sequence CCICFDQACTIEVQDCGHQMCAPCTLALCCHNKPNPTTLTPPSPACPFCR. Residues 385–450 form a disordered region; sequence SACDPDKPSS…SNLDKPEHDL (66 aa).

Interacts (via ankyrin repeats) with XA21. In terms of processing, phosphorylated by XA21.

The catalysed reaction is S-ubiquitinyl-[E2 ubiquitin-conjugating enzyme]-L-cysteine + [acceptor protein]-L-lysine = [E2 ubiquitin-conjugating enzyme]-L-cysteine + N(6)-ubiquitinyl-[acceptor protein]-L-lysine.. Its pathway is protein modification; protein ubiquitination. E3 ubiquitin-protein ligase required for full accumulation of the LRR receptor kinase XA21 and XA21-mediated disease resistance. Binding to XA21 may stabilize the receptor kinase and maintain its protein level. Autoubiquitinated in vitro. This Oryza sativa subsp. japonica (Rice) protein is E3 ubiquitin-protein ligase XB3 (XB3).